We begin with the raw amino-acid sequence, 737 residues long: Catalase-peroxidase (737 aa).

Residues 1–33 (MPEATEHPPIGEAQTEPAQSGCPMVIKPPVEGG) are disordered. The tryptophyl-tyrosyl-methioninium (Trp-Tyr) (with M-261) cross-link spans 107 to 235 (WHAAGTYRVQ…LGASHMGLIY (129 aa)). His108 serves as the catalytic Proton acceptor. Positions 235-261 (YVNPEGPEGNPDPIAAAIDIRETFGRM) form a cross-link, tryptophyl-tyrosyl-methioninium (Tyr-Met) (with W-107). His276 is a heme binding site.

Belongs to the peroxidase family. Peroxidase/catalase subfamily. In terms of assembly, homodimer or homotetramer. Requires heme b as cofactor. Formation of the three residue Trp-Tyr-Met cross-link is important for the catalase, but not the peroxidase activity of the enzyme.

The enzyme catalyses H2O2 + AH2 = A + 2 H2O. It catalyses the reaction 2 H2O2 = O2 + 2 H2O. In terms of biological role, bifunctional enzyme with both catalase and broad-spectrum peroxidase activity. May play a role in polycyclic aromatic hydrocarbon (PAH) metabolism. The sequence is that of Catalase-peroxidase from Mycolicibacterium vanbaalenii (Mycobacterium vanbaalenii).